A 397-amino-acid polypeptide reads, in one-letter code: MHNLVILGASGSIGQSTLKVLRRNPGRWQVLALTAARSVDAMVRDCLEFSPRFAVMVDEAAATALAGQLKTHGSATRVLSGQAALCEVAAHPDAHSVMAAIVGAAGLAPTMAAVRAGKRILLANKEALVMSGAFFMEAVREHGAELLPIDSEHNAIFQCLPEAIQRQPGYCDLAGAGISRILLTGSGGPFRYTDINALAQVTPAQAIAHPNWSMGAKISVDSATMINKGLEYIEARWLFNAAPEQIQVVIHPQSVIHSMVQYKDGSVMAQLGNPDMCTPIAHALAYPARVESGVEPLDFFSVGEFSFIRPDYERYPCLALAMSACQQGQAATTALNAANEEAVAAFLAERIGFMDIARVNEATMVALGSSPVGSLDDLIALDGAARARAHNLIEELS.

Ser10, Gly11, Ser12, Ile13, Ala36, Arg37, and Asn124 together coordinate NADPH. Lys125 contributes to the 1-deoxy-D-xylulose 5-phosphate binding site. Glu126 provides a ligand contact to NADPH. Asp150 serves as a coordination point for Mn(2+). Ser151, Glu152, Ser186, and His209 together coordinate 1-deoxy-D-xylulose 5-phosphate. Residue Glu152 participates in Mn(2+) binding. Gly215 is a binding site for NADPH. Positions 222, 227, 228, and 231 each coordinate 1-deoxy-D-xylulose 5-phosphate. Glu231 is a binding site for Mn(2+).

Belongs to the DXR family. Mg(2+) is required as a cofactor. Requires Mn(2+) as cofactor.

It carries out the reaction 2-C-methyl-D-erythritol 4-phosphate + NADP(+) = 1-deoxy-D-xylulose 5-phosphate + NADPH + H(+). The protein operates within isoprenoid biosynthesis; isopentenyl diphosphate biosynthesis via DXP pathway; isopentenyl diphosphate from 1-deoxy-D-xylulose 5-phosphate: step 1/6. Its function is as follows. Catalyzes the NADPH-dependent rearrangement and reduction of 1-deoxy-D-xylulose-5-phosphate (DXP) to 2-C-methyl-D-erythritol 4-phosphate (MEP). The sequence is that of 1-deoxy-D-xylulose 5-phosphate reductoisomerase from Aeromonas salmonicida (strain A449).